The primary structure comprises 197 residues: Phosphoheptose isomerase (197 aa).

An SIS domain is found at 34 to 196 (MVHCLLGGNK…DRTLFPQDEQ (163 aa)). Residue 49-51 (NGG) participates in substrate binding. 2 residues coordinate Zn(2+): histidine 58 and glutamate 62. Substrate-binding positions include glutamate 62, 91-92 (ND), 117-119 (STS), serine 122, and glutamine 172. Positions 172 and 180 each coordinate Zn(2+).

The protein belongs to the SIS family. GmhA subfamily. As to quaternary structure, homotetramer. It depends on Zn(2+) as a cofactor.

Its subcellular location is the cytoplasm. It carries out the reaction 2 D-sedoheptulose 7-phosphate = D-glycero-alpha-D-manno-heptose 7-phosphate + D-glycero-beta-D-manno-heptose 7-phosphate. It participates in carbohydrate biosynthesis; D-glycero-D-manno-heptose 7-phosphate biosynthesis; D-glycero-alpha-D-manno-heptose 7-phosphate and D-glycero-beta-D-manno-heptose 7-phosphate from sedoheptulose 7-phosphate: step 1/1. Its function is as follows. Catalyzes the isomerization of sedoheptulose 7-phosphate in D-glycero-D-manno-heptose 7-phosphate. The protein is Phosphoheptose isomerase of Shewanella baltica (strain OS223).